The following is a 265-amino-acid chain: Ribosomal RNA small subunit methyltransferase A (265 aa).

Residues histidine 17, leucine 19, glycine 44, glutamate 65, aspartate 90, and asparagine 112 each contribute to the S-adenosyl-L-methionine site.

It belongs to the class I-like SAM-binding methyltransferase superfamily. rRNA adenine N(6)-methyltransferase family. RsmA subfamily.

It localises to the cytoplasm. The catalysed reaction is adenosine(1518)/adenosine(1519) in 16S rRNA + 4 S-adenosyl-L-methionine = N(6)-dimethyladenosine(1518)/N(6)-dimethyladenosine(1519) in 16S rRNA + 4 S-adenosyl-L-homocysteine + 4 H(+). Functionally, specifically dimethylates two adjacent adenosines (A1518 and A1519) in the loop of a conserved hairpin near the 3'-end of 16S rRNA in the 30S particle. May play a critical role in biogenesis of 30S subunits. In Xylella fastidiosa (strain 9a5c), this protein is Ribosomal RNA small subunit methyltransferase A.